The following is a 152-amino-acid chain: Transcriptional regulator MraZ (152 aa).

SpoVT-AbrB domains lie at 5 to 52 (ATLV…PLPE) and 81 to 124 (ASEC…DETT).

Belongs to the MraZ family. As to quaternary structure, forms oligomers.

It localises to the cytoplasm. The protein localises to the nucleoid. In terms of biological role, negatively regulates its own expression and that of the subsequent genes in the proximal part of the division and cell wall (dcw) gene cluster. Acts by binding directly to DNA. May also regulate the expression of genes outside the dcw cluster. This Escherichia coli O45:K1 (strain S88 / ExPEC) protein is Transcriptional regulator MraZ.